The following is a 337-amino-acid chain: Methionyl-tRNA formyltransferase (337 aa).

110 to 113 serves as a coordination point for (6S)-5,6,7,8-tetrahydrofolate; sequence SLLP.

This sequence belongs to the Fmt family.

It catalyses the reaction L-methionyl-tRNA(fMet) + (6R)-10-formyltetrahydrofolate = N-formyl-L-methionyl-tRNA(fMet) + (6S)-5,6,7,8-tetrahydrofolate + H(+). Attaches a formyl group to the free amino group of methionyl-tRNA(fMet). The formyl group appears to play a dual role in the initiator identity of N-formylmethionyl-tRNA by promoting its recognition by IF2 and preventing the misappropriation of this tRNA by the elongation apparatus. This Frankia casuarinae (strain DSM 45818 / CECT 9043 / HFP020203 / CcI3) protein is Methionyl-tRNA formyltransferase.